A 210-amino-acid chain; its full sequence is Mitochondrial import receptor subunit TOM20-2 (210 aa).

N-acetylmethionine is present on Met-1. The Cytoplasmic portion of the chain corresponds to 1–178; that stretch reads MEFSTADFER…SSKKKKRNTE (178 aa). 2 TPR repeats span residues 42–75 and 83–120; these read LLEL…NPGK and ANAY…DPGN. Positions 151–161 are enriched in gly residues; it reads GGGGGGGGGGM. A disordered region spans residues 151-172; it reads GGGGGGGGGGMASSNVSQSSKK. A helical membrane pass occupies residues 179–199; that stretch reads FTYDVCGWIILACGIVAWVGM. At 200 to 210 the chain is on the mitochondrial intermembrane side; sequence AKSLGPPPPAR.

The protein belongs to the Tom20 family. In terms of assembly, forms part of the preprotein translocase complex of the outer mitochondrial membrane (TOM complex) which consists of at least 6 different proteins (TOM5, TOM6, TOM7, TOM20, TOM22/TOM9 and TOM40). Component of a mitochondrial large protein complex that contains, at least, MIC60, DGS1, TOM40, TOM20 proteins, and petC/RISP. In terms of processing, the N-terminus is blocked. Expressed in roots, flowers, young cotyledons and leaves.

Its subcellular location is the mitochondrion outer membrane. Central component of the receptor complex responsible for the recognition and translocation of cytosolically synthesized mitochondrial preproteins. Together with TOM22 functions as the transit peptide receptor at the surface of the mitochondrion outer membrane and facilitates the movement of preproteins into the translocation pore. The sequence is that of Mitochondrial import receptor subunit TOM20-2 from Arabidopsis thaliana (Mouse-ear cress).